The chain runs to 290 residues: Glycine-N-acyltransferase-like protein 3 (290 aa).

It catalyses the reaction an acyl-CoA + glycine = an N-acylglycine + CoA + H(+). The catalysed reaction is (9Z)-octadecenoyl-CoA + glycine = N-(9Z-octadecenoyl)glycine + CoA + H(+). The enzyme catalyses hexadecanoyl-CoA + glycine = N-hexadecanoylglycine + CoA + H(+). It functions in the pathway lipid metabolism. Its function is as follows. Catalyzes the conjugation of long-chain fatty acyl-CoA thioester and glycine to produce long-chain N-(fatty acyl)glycine, an intermediate in the primary fatty acid amide biosynthetic pathway. The sequence is that of Glycine-N-acyltransferase-like protein 3 from Mus musculus (Mouse).